Reading from the N-terminus, the 296-residue chain is Mitochondrial arginine transporter BAC2 (296 aa).

Solcar repeat units lie at residues 13–93, 104–187, and 198–282; these read GREF…FSRS, PSYR…VRER, and ENLR…ALRC. 6 helical membrane passes run 16-36, 70-90, 110-130, 162-181, 204-224, and 260-280; these read FVAG…LDTL, AAPL…YAIF, ALGG…VELI, GLTI…FWTY, LVAG…LDVV, and TAVA…EVAL.

Belongs to the mitochondrial carrier (TC 2.A.29) family. As to expression, high expression in flowers, stamens, petals and pollen. Expressed in roots, leaves and stems.

The protein localises to the mitochondrion inner membrane. With respect to regulation, inhibited by mercuric chloride. Functionally, mitochondrial arginine transporter that catalyzes the counter-exchange of arginine with lysine, ornithine, arginine, histidine and citrulline. Substrate preference in reconstituted proteoliposomes is arginine &gt; homoarginine &gt; citrulline &gt; histidine &gt; lysine &gt; ornithine. May be involved in the delivery of arginine, released from seed reserves, to mitochondrial arginase and the export of ornithine. May contribute to proline accumulation in response to hyperosmotic stress. In Arabidopsis thaliana (Mouse-ear cress), this protein is Mitochondrial arginine transporter BAC2 (BAC2).